A 36-amino-acid polypeptide reads, in one-letter code: Toxin Bcg III 29.21 (36 aa).

Cysteine 6 and cysteine 31 are disulfide-bonded.

It localises to the secreted. The protein resides in the nematocyst. This Bunodosoma cangicum (Sea anemone) protein is Toxin Bcg III 29.21.